The chain runs to 739 residues: Phosphoribosylformylglycinamidine synthase subunit PurL (739 aa).

His-54 is an active-site residue. ATP-binding residues include Tyr-57 and Lys-96. Glu-98 serves as a coordination point for Mg(2+). Residues 99 to 102 (SHNH) and Arg-121 each bind substrate. The Proton acceptor role is filled by His-100. Asp-122 serves as a coordination point for Mg(2+). Substrate is bound at residue Gln-245. Asp-273 serves as a coordination point for Mg(2+). Residue 317–319 (ESQ) coordinates substrate. ATP contacts are provided by Asp-500 and Gly-537. Asn-538 contributes to the Mg(2+) binding site. Ser-540 is a substrate binding site.

It belongs to the FGAMS family. As to quaternary structure, monomer. Part of the FGAM synthase complex composed of 1 PurL, 1 PurQ and 2 PurS subunits.

The protein localises to the cytoplasm. It catalyses the reaction N(2)-formyl-N(1)-(5-phospho-beta-D-ribosyl)glycinamide + L-glutamine + ATP + H2O = 2-formamido-N(1)-(5-O-phospho-beta-D-ribosyl)acetamidine + L-glutamate + ADP + phosphate + H(+). It participates in purine metabolism; IMP biosynthesis via de novo pathway; 5-amino-1-(5-phospho-D-ribosyl)imidazole from N(2)-formyl-N(1)-(5-phospho-D-ribosyl)glycinamide: step 1/2. Functionally, part of the phosphoribosylformylglycinamidine synthase complex involved in the purines biosynthetic pathway. Catalyzes the ATP-dependent conversion of formylglycinamide ribonucleotide (FGAR) and glutamine to yield formylglycinamidine ribonucleotide (FGAM) and glutamate. The FGAM synthase complex is composed of three subunits. PurQ produces an ammonia molecule by converting glutamine to glutamate. PurL transfers the ammonia molecule to FGAR to form FGAM in an ATP-dependent manner. PurS interacts with PurQ and PurL and is thought to assist in the transfer of the ammonia molecule from PurQ to PurL. The polypeptide is Phosphoribosylformylglycinamidine synthase subunit PurL (Exiguobacterium sp. (strain ATCC BAA-1283 / AT1b)).